The following is a 403-amino-acid chain: MALTTTGTEQHDLFSGTFWQNPHPAYAALRAEDPVRKLALPDGPVWLLTRYADVREAFVDPRLSKDWRHTLPEDQRADMPATPTPMMILMDPPDHTRLRKLVGRSFTVRRMNELEPRITEIADGLLAGLPTDGPVDLMREYAFQIPVQVICELLGVPAEDRDDFSAWSSVLVDDSPADDKNAAMGKLHGYLSDLLERKRTEPDDALLSSLLAVSDEDGDRLSQEELVAMAMLLLIAGHETTVNLIGNGVLALLTHPDQRKLLAEDPSLISSAVEEFLRFDSPVSQAPIRFTAEDVTYSGVTIPAGEMVMLGLAAANRDADWMPEPDRLDITRDASGGVFFGHGIHFCLGAQLARLEGRVAIGRLFADRPELALAVGLDELVYRESTLVRGLSRMPVTMGPRSA.

Cysteine 347 contributes to the heme binding site.

Belongs to the cytochrome P450 family. Heme is required as a cofactor.

The protein resides in the cytoplasm. It catalyses the reaction 5beta-cholestane-3alpha,7alpha,12alpha-triol + 6 reduced [adrenodoxin] + 3 O2 + 5 H(+) = (25R)-3alpha,7alpha,12alpha-trihydroxy-5beta-cholestan-26-oate + 6 oxidized [adrenodoxin] + 4 H2O. Activated by partially methylated beta-cyclodextrin. Hydroxylates vitamin D(3) into 25-hydroxyvitamin D(3) and 1-alpha,25-dihydroxyvitamin D(3), its physiologically active forms. It first hydroxylates the C-25 position of vitamin D(3) to form 25-hydroxyvitamin D(3), then subsequently hydroxylates the C-1-alpha position to form 1-alpha,25-dihydroxyvitamin D(3). Also displays 25-hydroxylase activity on vitamin D(2) and 7-dehydrocholesterol. May play a role in the biosynthesis of steroid metabolic intermediates. The chain is Vitamin D(3) 25-hydroxylase from Pseudonocardia autotrophica (Amycolata autotrophica).